Reading from the N-terminus, the 119-residue chain is Holo-[acyl-carrier-protein] synthase (119 aa).

Mg(2+)-binding residues include Asp8 and Glu58.

It belongs to the P-Pant transferase superfamily. AcpS family. Mg(2+) is required as a cofactor.

It is found in the cytoplasm. The catalysed reaction is apo-[ACP] + CoA = holo-[ACP] + adenosine 3',5'-bisphosphate + H(+). In terms of biological role, transfers the 4'-phosphopantetheine moiety from coenzyme A to a Ser of acyl-carrier-protein. The protein is Holo-[acyl-carrier-protein] synthase of Oceanobacillus iheyensis (strain DSM 14371 / CIP 107618 / JCM 11309 / KCTC 3954 / HTE831).